A 67-amino-acid chain; its full sequence is Beta-defensin 1 (67 aa).

The signal sequence occupies residues 1-22; sequence MRIHYLLFAVLFLFLMPVPGEG. 3 disulfides stabilise this stretch: C33–C62, C40–C55, and C45–C63.

Monomer. Homodimer. In terms of tissue distribution, highly expressed in tongue, nasopharyngeal mucosa and skin, and to a lower extent in the Eustachian tube, lung and trachea.

The protein localises to the secreted. It is found in the membrane. Functionally, has antibacterial activity against Gram-positive bacterium S.pneumoniae Serotype 14. Is also active against Gram-negative bacteria M.catarrhalis 1857, and non-typeable H.influenzae strains 86-028NP and 1128. Has antifungal activity against C.albicans. May have a role in maintaining sterility in the middle ear. May act as a ligand for C-C chemokine receptor CCR6. Positively regulates the sperm motility and bactericidal activity in a CCR6-dependent manner. Binds to CCR6 and triggers Ca2+ mobilization in the sperm which is important for its motility. The chain is Beta-defensin 1 (DEFB1) from Chinchilla lanigera (Long-tailed chinchilla).